Here is a 447-residue protein sequence, read N- to C-terminus: Argininosuccinate synthase (447 aa).

Residues 17–25 (AFSGGLDTS) and A43 each bind ATP. Y99 serves as a coordination point for L-citrulline. The ATP site is built by G129 and T131. The L-aspartate site is built by T131, N135, and D136. N135 is a binding site for L-citrulline. Position 136 (D136) interacts with ATP. 2 residues coordinate L-citrulline: R139 and S192. Residue D194 participates in ATP binding. L-citrulline is bound by residues T201, E203, and E280.

Belongs to the argininosuccinate synthase family. Type 2 subfamily. As to quaternary structure, homotetramer.

Its subcellular location is the cytoplasm. It catalyses the reaction L-citrulline + L-aspartate + ATP = 2-(N(omega)-L-arginino)succinate + AMP + diphosphate + H(+). Its pathway is amino-acid biosynthesis; L-arginine biosynthesis; L-arginine from L-ornithine and carbamoyl phosphate: step 2/3. The sequence is that of Argininosuccinate synthase from Salmonella paratyphi B (strain ATCC BAA-1250 / SPB7).